The chain runs to 395 residues: MSKRDFYEVLGVDKTADEKTLKSAYRKQAMKYHPDRNPGDAEAEAQFKVVGEAYSVLSDPNKRAAYDRMGHAAFEQGGGMGGGQGPFGGGGGAADFADIFEQVFGEAFNMGGGGGRRGGRGQAGPARGSDLRFDMEISLEDAFNGKDETIKVPTAMNCERCDGQGNEPGTELETCGTCQGAGRIRRSQGFFTMEQTCPQCGGRGQYVKTPCNDCDGVGRVRKTRTLNVTVPAGVEDGTRIRLAGEGEAGARGGPRGDLYIFISVREHEIFERDGPNLYCRTPASMVQAALGCTIQVPTIEGGKAEMKIAEGAQTGKRMRMRGKGMPRLRGGPRGDMIVELFVETPRNLCDRQKELLKEFCDLSGEGCNPDSAGFFNKVKQFWDEVTTDDGRPNAG.

The J domain occupies 5-70 (DFYEVLGVDK…NKRAAYDRMG (66 aa)). The CR-type zinc finger occupies 145-223 (GKDETIKVPT…CDGVGRVRKT (79 aa)). Zn(2+) contacts are provided by cysteine 158, cysteine 161, cysteine 175, cysteine 178, cysteine 197, cysteine 200, cysteine 211, and cysteine 214. 4 CXXCXGXG motif repeats span residues 158–165 (CERCDGQG), 175–182 (CGTCQGAG), 197–204 (CPQCGGRG), and 211–218 (CNDCDGVG).

Belongs to the DnaJ family. In terms of assembly, homodimer. Zn(2+) is required as a cofactor.

Its subcellular location is the cytoplasm. Participates actively in the response to hyperosmotic and heat shock by preventing the aggregation of stress-denatured proteins and by disaggregating proteins, also in an autonomous, DnaK-independent fashion. Unfolded proteins bind initially to DnaJ; upon interaction with the DnaJ-bound protein, DnaK hydrolyzes its bound ATP, resulting in the formation of a stable complex. GrpE releases ADP from DnaK; ATP binding to DnaK triggers the release of the substrate protein, thus completing the reaction cycle. Several rounds of ATP-dependent interactions between DnaJ, DnaK and GrpE are required for fully efficient folding. Also involved, together with DnaK and GrpE, in the DNA replication of plasmids through activation of initiation proteins. The sequence is that of Chaperone protein DnaJ from Maricaulis maris (strain MCS10) (Caulobacter maris).